Consider the following 797-residue polypeptide: Interphotoreceptor matrix proteoglycan 1 (797 aa).

A signal peptide spans methionine 1 to glycine 20. Asparagine 42, asparagine 143, asparagine 191, and asparagine 215 each carry an N-linked (GlcNAc...) asparagine glycan. The SEA 1 domain occupies glutamate 232–aspartate 354. Residues threonine 403, threonine 421, threonine 432, and threonine 442 are each glycosylated (O-linked (GalNAc...) threonine). The region spanning arginine 571–glutamine 684 is the SEA 2 domain. Residues asparagine 592 and asparagine 616 are each glycosylated (N-linked (GlcNAc...) asparagine). The Heparin- and hyaluronan-binding motif lies at lysine 621–arginine 629. Residues asparagine 630 and asparagine 648 are each glycosylated (N-linked (GlcNAc...) asparagine).

Post-translationally, the N-terminus is blocked. Highly glycosylated (N- and O-linked carbohydrates and sialic acid). In terms of tissue distribution, expressed in the retina (at protein level). In the retina, specifically expressed by cone and rod photoreceptor cells. Localizes to cone and rod photoreceptor cells surrounding the interphotoreceptor matrix of the retina.

The protein localises to the cell projection. Its subcellular location is the cilium. The protein resides in the photoreceptor outer segment. It localises to the secreted. It is found in the extracellular space. The protein localises to the extracellular matrix. Its subcellular location is the interphotoreceptor matrix. The protein resides in the photoreceptor inner segment. Its function is as follows. Chondroitin sulfate-, heparin- and hyaluronan-binding protein. May serve to form a basic macromolecular scaffold comprising the insoluble interphotoreceptor matrix. This Homo sapiens (Human) protein is Interphotoreceptor matrix proteoglycan 1.